Here is a 216-residue protein sequence, read N- to C-terminus: Heart- and neural crest derivatives-expressed protein 2 (216 aa).

A disordered region spans residues 74-115 (MDHSHYGGVPPGSGPPGLGGPRPVKRRGTANRKERRRTQSIN). The span at 82 to 93 (VPPGSGPPGLGG) shows a compositional bias: gly residues. The span at 96 to 111 (PVKRRGTANRKERRRT) shows a compositional bias: basic residues. One can recognise a bHLH domain in the interval 98–150 (KRRGTANRKERRRTQSINSAFAELRECIPNVPADTKLSKIKTLRLATSYIAYL).

Efficient DNA binding requires dimerization with another bHLH protein.

Its subcellular location is the nucleus. In terms of biological role, essential for cardiac morphogenesis. Binds DNA on E-box consensus sequence 5'-CANNTG-3'. Plays an important role in limb development, particularly in the establishment of anterior-posterior polarization of the limb bud. In Gallus gallus (Chicken), this protein is Heart- and neural crest derivatives-expressed protein 2 (HAND2).